Here is a 45-residue protein sequence, read N- to C-terminus: Small, acid-soluble spore protein P (45 aa).

The segment covering 1-12 (MTERHTAKDIRK) has biased composition (basic and acidic residues). Positions 1–45 (MTERHTAKDIRKNAPKGENPGQPEPLSGSKKVKKRNHVSQTNGEG) are disordered.

Belongs to the SspP family.

It is found in the spore core. The chain is Small, acid-soluble spore protein P from Halalkalibacterium halodurans (strain ATCC BAA-125 / DSM 18197 / FERM 7344 / JCM 9153 / C-125) (Bacillus halodurans).